A 273-amino-acid polypeptide reads, in one-letter code: Large ribosomal subunit protein uL2 (273 aa).

The segment at 228–273 (VDHPHGGGEGKTSGGRHPVTPWGFPTKGKKTRKNKRTSKFIVKKRK) is disordered. A compositionally biased stretch (basic residues) spans 254 to 273 (KGKKTRKNKRTSKFIVKKRK).

The protein belongs to the universal ribosomal protein uL2 family. As to quaternary structure, part of the 50S ribosomal subunit. Forms a bridge to the 30S subunit in the 70S ribosome.

In terms of biological role, one of the primary rRNA binding proteins. Required for association of the 30S and 50S subunits to form the 70S ribosome, for tRNA binding and peptide bond formation. It has been suggested to have peptidyltransferase activity; this is somewhat controversial. Makes several contacts with the 16S rRNA in the 70S ribosome. The sequence is that of Large ribosomal subunit protein uL2 from Rickettsia canadensis (strain McKiel).